The sequence spans 361 residues: Histidinol-phosphate aminotransferase (361 aa).

Lys219 is subject to N6-(pyridoxal phosphate)lysine.

It belongs to the class-II pyridoxal-phosphate-dependent aminotransferase family. Histidinol-phosphate aminotransferase subfamily. Homodimer. The cofactor is pyridoxal 5'-phosphate.

The catalysed reaction is L-histidinol phosphate + 2-oxoglutarate = 3-(imidazol-4-yl)-2-oxopropyl phosphate + L-glutamate. The protein operates within amino-acid biosynthesis; L-histidine biosynthesis; L-histidine from 5-phospho-alpha-D-ribose 1-diphosphate: step 7/9. The sequence is that of Histidinol-phosphate aminotransferase from Acinetobacter baumannii (strain SDF).